The sequence spans 93 residues: Small ribosomal subunit protein bS20 (93 aa).

The protein belongs to the bacterial ribosomal protein bS20 family.

Binds directly to 16S ribosomal RNA. The protein is Small ribosomal subunit protein bS20 of Dictyoglomus turgidum (strain DSM 6724 / Z-1310).